The chain runs to 385 residues: 8-amino-7-oxononanoate synthase (385 aa).

R21 lines the substrate pocket. Pyridoxal 5'-phosphate is bound at residue 108–109; sequence GF. H133 is a substrate binding site. Pyridoxal 5'-phosphate contacts are provided by S179, H207, and T233. N6-(pyridoxal phosphate)lysine is present on K236. T352 serves as a coordination point for substrate.

The protein belongs to the class-II pyridoxal-phosphate-dependent aminotransferase family. BioF subfamily. As to quaternary structure, homodimer. Pyridoxal 5'-phosphate is required as a cofactor.

It catalyses the reaction 6-carboxyhexanoyl-[ACP] + L-alanine + H(+) = (8S)-8-amino-7-oxononanoate + holo-[ACP] + CO2. It functions in the pathway cofactor biosynthesis; biotin biosynthesis. Functionally, catalyzes the decarboxylative condensation of pimeloyl-[acyl-carrier protein] and L-alanine to produce 8-amino-7-oxononanoate (AON), [acyl-carrier protein], and carbon dioxide. The sequence is that of 8-amino-7-oxononanoate synthase from Salmonella paratyphi C (strain RKS4594).